A 351-amino-acid chain; its full sequence is MDLAELVEEIKKELSFAELKGKKISIDAYNALYQFLAAIRQPDGTPLMDSQGRVTSHLNGLFYRTISILEEGIIPIYVFDGKPPEQKAQELERRKKVKEEAEKKLEQAKTEGSIKTSELKKYAQMSIRLTNEMAEESKELLKAMGIPVVQAPSEGEAEAAYINILGLSWATASQDYDSLLFGAKRLIRNLTLSGKRKLPGKDVYVEIKPELIELDTLLKKLGLTREQLIDIGIIVGTDYNPDGIKGYGVKTAYRIIKKYGSLEKAIEKGEIPKIKVNFNVEEIRSLFLKPQVVEPKENLELVDCDSNKILDILVKTHDFNEERVKNGIERLEKAKREAKGASRQTGLDQWF.

Residues 1-98 (MDLAELVEEI…QELERRKKVK (98 aa)) are N-domain. Positions 27, 80, 154, 156, 175, 177, and 238 each coordinate Mg(2+). Positions 118–260 (ELKKYAQMSI…TAYRIIKKYG (143 aa)) are I-domain. The interaction with PCNA stretch occupies residues 343 to 351 (RQTGLDQWF).

This sequence belongs to the XPG/RAD2 endonuclease family. FEN1 subfamily. In terms of assembly, interacts with PCNA. PCNA stimulates the nuclease activity without altering cleavage specificity. The cofactor is Mg(2+).

Its function is as follows. Structure-specific nuclease with 5'-flap endonuclease and 5'-3' exonuclease activities involved in DNA replication and repair. During DNA replication, cleaves the 5'-overhanging flap structure that is generated by displacement synthesis when DNA polymerase encounters the 5'-end of a downstream Okazaki fragment. Binds the unpaired 3'-DNA end and kinks the DNA to facilitate 5' cleavage specificity. Cleaves one nucleotide into the double-stranded DNA from the junction in flap DNA, leaving a nick for ligation. Also involved in the base excision repair (BER) pathway. Acts as a genome stabilization factor that prevents flaps from equilibrating into structures that lead to duplications and deletions. Also possesses 5'-3' exonuclease activity on nicked or gapped double-stranded DNA. The sequence is that of Flap endonuclease 1 from Sulfurisphaera tokodaii (strain DSM 16993 / JCM 10545 / NBRC 100140 / 7) (Sulfolobus tokodaii).